Reading from the N-terminus, the 462-residue chain is Cysteine--tRNA ligase (462 aa).

Residue cysteine 27 coordinates Zn(2+). A 'HIGH' region motif is present at residues 29–39 (PTVYDLAHIGN). Residues cysteine 211, histidine 236, and glutamate 240 each coordinate Zn(2+). Positions 270-274 (KMSKS) match the 'KMSKS' region motif. Lysine 273 contacts ATP.

It belongs to the class-I aminoacyl-tRNA synthetase family. Monomer. The cofactor is Zn(2+).

It is found in the cytoplasm. It catalyses the reaction tRNA(Cys) + L-cysteine + ATP = L-cysteinyl-tRNA(Cys) + AMP + diphosphate. This Anaplasma phagocytophilum (strain HZ) protein is Cysteine--tRNA ligase.